The primary structure comprises 302 residues: Nucleotide-binding protein Bcep18194_A6125 (302 aa).

ATP is bound at residue 8–15 (GISGSGKS). A GTP-binding site is contributed by 57–60 (DARS).

The protein belongs to the RapZ-like family.

In terms of biological role, displays ATPase and GTPase activities. This Burkholderia lata (strain ATCC 17760 / DSM 23089 / LMG 22485 / NCIMB 9086 / R18194 / 383) protein is Nucleotide-binding protein Bcep18194_A6125.